The primary structure comprises 362 residues: Protein MGF 360-19R (362 aa).

One copy of the ANK repeat lies at 66 to 98 (LLNTALMKAVQDNNYELIKLFTEWGANINYGLI).

It belongs to the asfivirus MGF 360 family.

Its function is as follows. Plays a role in virus cell tropism, and may be required for efficient virus replication in macrophages. This Ornithodoros (relapsing fever ticks) protein is Protein MGF 360-19R.